Consider the following 524-residue polypeptide: Putative UDP-glucuronosyltransferase ugt-56 (524 aa).

The first 20 residues, 1–20 (MLWAFIVWLGALCIYGSAFD), serve as a signal peptide directing secretion. N-linked (GlcNAc...) asparagine glycosylation is found at Asn-125, Asn-277, and Asn-335. A helical membrane pass occupies residues 488–508 (LIDSSIALVFMLFIFVFVNHF).

This sequence belongs to the UDP-glycosyltransferase family.

It is found in the membrane. It carries out the reaction glucuronate acceptor + UDP-alpha-D-glucuronate = acceptor beta-D-glucuronoside + UDP + H(+). This chain is Putative UDP-glucuronosyltransferase ugt-56 (ugt-56), found in Caenorhabditis elegans.